The chain runs to 604 residues: Glucoamylase 1 (604 aa).

The first 25 residues, 1–25, serve as a signal peptide directing secretion; it reads MQLFNLPLKVSFFLVLSYFSLLVSA. Residues 26 to 115 form an adsorption to raw starch region; sequence ASIPSSASVQ…EFYIKYEVSG (90 aa). The CBM21 domain maps to 26–130; the sequence is ASIPSSASVQ…NNNSANYQVS (105 aa). Residues 116–604 form a starch degradation region; that stretch reads KTYYDNNNSA…SYAKAGAPAA (489 aa). N-linked (GlcNAc...) asparagine glycosylation occurs at Asn-122. The interval 127–164 is disordered; that stretch reads YQVSTSKPTTTTATATTTTAPSTSTTTPPSRSEPATFP. Positions 130–162 are enriched in low complexity; that stretch reads STSKPTTTTATATTTTAPSTSTTTPPSRSEPAT. N-linked (GlcNAc...) asparagine glycosylation is found at Asn-167, Asn-230, and Asn-236. Substrate is bound at residue Trp-279. Asp-336 functions as the Proton acceptor in the catalytic mechanism. Glu-339 acts as the Proton donor in catalysis. The N-linked (GlcNAc...) asparagine glycan is linked to Asn-564.

This sequence belongs to the glycosyl hydrolase 15 family.

The enzyme catalyses Hydrolysis of terminal (1-&gt;4)-linked alpha-D-glucose residues successively from non-reducing ends of the chains with release of beta-D-glucose.. This is Glucoamylase 1 from Rhizopus oryzae (Mucormycosis agent).